The following is a 307-amino-acid chain: Aspartate carbamoyltransferase catalytic subunit (307 aa).

2 residues coordinate carbamoyl phosphate: arginine 49 and threonine 50. An L-aspartate-binding site is contributed by lysine 77. Arginine 99, histidine 127, and glutamine 130 together coordinate carbamoyl phosphate. Positions 160 and 211 each coordinate L-aspartate. Positions 250 and 251 each coordinate carbamoyl phosphate.

The protein belongs to the aspartate/ornithine carbamoyltransferase superfamily. ATCase family. Heterododecamer (2C3:3R2) of six catalytic PyrB chains organized as two trimers (C3), and six regulatory PyrI chains organized as three dimers (R2).

The catalysed reaction is carbamoyl phosphate + L-aspartate = N-carbamoyl-L-aspartate + phosphate + H(+). It participates in pyrimidine metabolism; UMP biosynthesis via de novo pathway; (S)-dihydroorotate from bicarbonate: step 2/3. In terms of biological role, catalyzes the condensation of carbamoyl phosphate and aspartate to form carbamoyl aspartate and inorganic phosphate, the committed step in the de novo pyrimidine nucleotide biosynthesis pathway. The chain is Aspartate carbamoyltransferase catalytic subunit from Bacillus pumilus (strain SAFR-032).